We begin with the raw amino-acid sequence, 1142 residues long: Protein lin-25 (1142 aa).

Residues 600-613 (IEEEIEEEEEDIEP) show a composition bias toward acidic residues. The segment at 600–706 (IEEEIEEEEE…EKPKEPLEPT (107 aa)) is disordered. Basic and acidic residues-rich tracts occupy residues 614–627 (EVVKEMKESGTEKE), 652–662 (DEQKTEEKMDT), and 679–703 (DPPKVEEPAERINQEKPEEKPKEPL).

It localises to the nucleus. The protein localises to the cytoplasm. Functionally, participates in the inductive signaling pathway downstream of let-60 Ras and the RAF/MAP kinase cascade to regulate specification and differentiation of many cell types. Positively regulates the fate of vulval precursor cells. Required for induction of the P12 and excretory duct cell fates. In males, it is also required for proper formation of spicules. Does not function in the signaling pathway that promotes exit from pachytene. This Caenorhabditis briggsae protein is Protein lin-25.